The chain runs to 356 residues: MAMLFGFGQSAEIQIRLSNEDTRKIVKARGDDGNMHDHFLYYDGESVTGTVHVNLKKANHKFEHQGIRIEFIGQIEVYYDRGNQQDFISLTRELARPGDLTQNAQFPFEFNNVEKPFETYMGTNVKLRYFLRVTVIRRLTDLTKELDLVVHALSSYPDNDKSIKMEVGIEDCLHIEFEYNKNKYHLQDVIVGKIYFLLVRIKIKYMEIAILKTEVVGSGPNTFKESETVAKFEIMDGAPVRGESIPIRLFLAGYDLAPSMRDVGKKFSVKYFLNLVLVDEEDRRYFKQQEVTLWRKADKVMRRPGTEDDEEEKQTTSIPGTQKFTAPAPVEHPKPESPRSDPKSGSTSPDDNSDSS.

Positions 301–356 are disordered; the sequence is MRRPGTEDDEEEKQTTSIPGTQKFTAPAPVEHPKPESPRSDPKSGSTSPDDNSDSS. A compositionally biased stretch (polar residues) spans 315-324; that stretch reads TTSIPGTQKF. The span at 331–342 shows a compositional bias: basic and acidic residues; that stretch reads EHPKPESPRSDP.

It belongs to the VPS26 family.

Functionally, may play a role in vesicular protein sorting, similar to the yeast retromer proteins. In Caenorhabditis elegans, this protein is Vacuolar protein sorting-associated protein 26 (vps-26).